A 213-amino-acid polypeptide reads, in one-letter code: MADKSHQCVIVGIAGASASGKSLIASTLYREVRERVGDENIGVIPEDAYYKDQSHLTMEERVKTNYDHPSAMDHSLLLQHLQMLKAGQAIDLPVYSYVEHTRTQKTIRLEPKKVIILEGILLLTDARLRQEMNFSIFVDTPLDICLMRRMKRDVNERGRSMDSVMAQYQKTVRPMFLQFIEPSKQYADIIVPRGGKNRIAIDILKAKINQFFE.

Position 15-22 (15-22 (GASASGKS)) interacts with ATP.

It belongs to the uridine kinase family.

It localises to the cytoplasm. The enzyme catalyses uridine + ATP = UMP + ADP + H(+). It carries out the reaction cytidine + ATP = CMP + ADP + H(+). It functions in the pathway pyrimidine metabolism; CTP biosynthesis via salvage pathway; CTP from cytidine: step 1/3. The protein operates within pyrimidine metabolism; UMP biosynthesis via salvage pathway; UMP from uridine: step 1/1. The sequence is that of Uridine kinase from Erwinia tasmaniensis (strain DSM 17950 / CFBP 7177 / CIP 109463 / NCPPB 4357 / Et1/99).